Here is a 124-residue protein sequence, read N- to C-terminus: Small ribosomal subunit protein uS13 (124 aa).

Residues 95 to 124 (GLPVRGQRTKTNARTRKGPKRTIAGKKKAR) form a disordered region.

The protein belongs to the universal ribosomal protein uS13 family. As to quaternary structure, part of the 30S ribosomal subunit. Forms a loose heterodimer with protein S19. Forms two bridges to the 50S subunit in the 70S ribosome.

Functionally, located at the top of the head of the 30S subunit, it contacts several helices of the 16S rRNA. In the 70S ribosome it contacts the 23S rRNA (bridge B1a) and protein L5 of the 50S subunit (bridge B1b), connecting the 2 subunits; these bridges are implicated in subunit movement. Contacts the tRNAs in the A and P-sites. The chain is Small ribosomal subunit protein uS13 from Mycobacterium avium (strain 104).